The chain runs to 221 residues: Coiled-coil domain-containing protein 70 (221 aa).

A coiled-coil region spans residues 129-168 (NALWEKDRNLLQEDKALWEEEKALWVEERALLEEEKALWE).

This Macaca fascicularis (Crab-eating macaque) protein is Coiled-coil domain-containing protein 70 (CCDC70).